We begin with the raw amino-acid sequence, 198 residues long: Glycerol-3-phosphate acyltransferase (198 aa).

The next 6 membrane-spanning stretches (helical) occupy residues 5–25 (YLIILGIVCYFIGNISGSIAI), 55–75 (VGLATFLIDFFKGLLCAYLGF), 79–99 (GSLGILVCGLLCVIGHILPVL), 114–134 (VLLFAQPLQVLILLILFLIVV), 139–159 (YVSLGSVLGCISAVIYGLIYI), and 164–184 (YIGLIYILLGIISLFKHRSNI).

Belongs to the PlsY family. Probably interacts with PlsX.

Its subcellular location is the cell membrane. It catalyses the reaction an acyl phosphate + sn-glycerol 3-phosphate = a 1-acyl-sn-glycero-3-phosphate + phosphate. The protein operates within lipid metabolism; phospholipid metabolism. Catalyzes the transfer of an acyl group from acyl-phosphate (acyl-PO(4)) to glycerol-3-phosphate (G3P) to form lysophosphatidic acid (LPA). This enzyme utilizes acyl-phosphate as fatty acyl donor, but not acyl-CoA or acyl-ACP. This is Glycerol-3-phosphate acyltransferase from Finegoldia magna (strain ATCC 29328 / DSM 20472 / WAL 2508) (Peptostreptococcus magnus).